The chain runs to 563 residues: Lipoprotein LpqB (563 aa).

Positions 1-19 are cleaved as a signal peptide; the sequence is MRRMKALTAAMTAALLVSG. C20 carries the N-palmitoyl cysteine lipid modification. C20 carries the S-diacylglycerol cysteine lipid modification.

This sequence belongs to the LpqB lipoprotein family.

The protein localises to the cell membrane. The sequence is that of Lipoprotein LpqB from Corynebacterium efficiens (strain DSM 44549 / YS-314 / AJ 12310 / JCM 11189 / NBRC 100395).